Reading from the N-terminus, the 130-residue chain is Small ribosomal subunit protein uS9 (130 aa).

The tract at residues 108–130 (PRMKERRKYGLKKARRAPQFSKR) is disordered. Positions 111-130 (KERRKYGLKKARRAPQFSKR) are enriched in basic residues.

The protein belongs to the universal ribosomal protein uS9 family.

The sequence is that of Small ribosomal subunit protein uS9 from Desulforamulus reducens (strain ATCC BAA-1160 / DSM 100696 / MI-1) (Desulfotomaculum reducens).